Here is a 231-residue protein sequence, read N- to C-terminus: MAKLSKRNRAIREKIEAGKLYPVEEAVALLAELSAVKFKESVDVAVNLGVDPRKSDQNVRGASVLPHGTGKTVRVAVFAQGAKAEEAKEAGADVVGFDDLAEQVQGGEINFDVVIASPDAMRVVGKLGTILGPRGLMPNPKVGTVTPDVAQAVKNAKGGQVRYRTDKGGIIHCTVGQVGFDTNAIKENVEALIADLKKAKPSSAKGTFFKKVTLSTTMGPGLSIDPASLVM.

Belongs to the universal ribosomal protein uL1 family. Part of the 50S ribosomal subunit.

Its function is as follows. Binds directly to 23S rRNA. The L1 stalk is quite mobile in the ribosome, and is involved in E site tRNA release. In terms of biological role, protein L1 is also a translational repressor protein, it controls the translation of the L11 operon by binding to its mRNA. The sequence is that of Large ribosomal subunit protein uL1 from Alcanivorax borkumensis (strain ATCC 700651 / DSM 11573 / NCIMB 13689 / SK2).